Consider the following 602-residue polypeptide: Alpha-glucosides permease MPH3 (602 aa).

Residues 1–106 (MKNLSFLINR…AAAWSLLVST (106 aa)) are Cytoplasmic-facing. Residues 107-127 (TLIMEGYDTAILGAFYALPIF) form a helical membrane-spanning segment. Residues 128 to 142 (QRKFGSQNDKTGEWE) are Extracellular-facing. A helical transmembrane segment spans residues 143-163 (ISASWQIGLTLCYMAGEIVGL). Topologically, residues 164-178 (QLTGPSVDLVGNRYT) are cytoplasmic. The chain crosses the membrane as a helical span at residues 179–199 (LIIALFFLAAFTFILYFCNSL). A topological domain (extracellular) is located at residue G200. Residues 201–221 (MIAVGQALCGMPWGCFQCLTV) traverse the membrane as a helical segment. Residues 222 to 234 (SYASEICPLALRY) lie on the Cytoplasmic side of the membrane. Residues 235–255 (YLTTYSNLCWLFGQLFAAGIM) traverse the membrane as a helical segment. At 256-270 (KNSQKKYADSELGYK) the chain is on the extracellular side. A helical transmembrane segment spans residues 271–291 (LPFALQWILPVPLALGIFFAP). The Cytoplasmic segment spans residues 292–363 (ESPWWLVKKG…EDKINRRRTR (72 aa)). The helical transmembrane segment at 364–384 (ITCLCWAGQATCGSILIGYST) threads the bilayer. The Extracellular segment spans residues 385-397 (YFYEKAGVSTEMS). The helical transmembrane segment at 398–418 (FTFSIIQYCLGICATFLSWWA) threads the bilayer. Residues 419–426 (SKYFGRYD) are Cytoplasmic-facing. A helical transmembrane segment spans residues 427-447 (LYAFGLAFQTIVFFIIGGLGC). At 448 to 459 (SSTHGSKMGSGS) the chain is on the extracellular side. Residues 460–480 (LLMAVAFFYNLGIAPVVFCLV) form a helical membrane-spanning segment. Topologically, residues 481–492 (SEMPSSRLRTKT) are cytoplasmic. Residues 493–513 (IILARNTYNVVSIICSVLILY) traverse the membrane as a helical segment. Residues 514-525 (QLNSKKWNWGAK) are Extracellular-facing. Residues 526–546 (SGFFWGVLCFCTLIWAVVDLP) form a helical membrane-spanning segment. At 547–602 (ETAGKTFVEINELFKLGVSARKFKSTKVDPFVVKTPPKDVSHNDPKGDIEASIAEE) the chain is on the cytoplasmic side. Positions 582–595 (PPKDVSHNDPKGDI) are enriched in basic and acidic residues. The interval 582 to 602 (PPKDVSHNDPKGDIEASIAEE) is disordered.

This sequence belongs to the major facilitator superfamily. Sugar transporter (TC 2.A.1.1) family.

It is found in the cell membrane. Functionally, high-affinity uptake of maltose and maltotriose. Also transports alpha-methylglucoside, glucose and turanose but not melezitose or trehalose. The sequence is that of Alpha-glucosides permease MPH3 (MPH3) from Saccharomyces cerevisiae (strain ATCC 204508 / S288c) (Baker's yeast).